Consider the following 160-residue polypeptide: Phosphopantetheine adenylyltransferase (160 aa).

This sequence belongs to the eukaryotic CoaD family.

It is found in the cytoplasm. The catalysed reaction is (R)-4'-phosphopantetheine + ATP + H(+) = 3'-dephospho-CoA + diphosphate. The protein operates within cofactor biosynthesis; coenzyme A biosynthesis. Its function is as follows. Reversibly transfers an adenylyl group from ATP to 4'-phosphopantetheine, yielding dephospho-CoA (dPCoA) and pyrophosphate. The polypeptide is Phosphopantetheine adenylyltransferase (Pyrococcus furiosus (strain ATCC 43587 / DSM 3638 / JCM 8422 / Vc1)).